The primary structure comprises 443 residues: Serine/threonine-protein kinase ISR1 (443 aa).

Positions 135–415 (LPSNKLVGQG…LRNDLFQDWK (281 aa)) constitute a Protein kinase domain. ATP contacts are provided by residues 141 to 149 (VGQGSYSYV) and Lys-169. Residue Asp-280 is the Proton acceptor of the active site.

The protein belongs to the protein kinase superfamily. Ser/Thr protein kinase family.

The enzyme catalyses L-seryl-[protein] + ATP = O-phospho-L-seryl-[protein] + ADP + H(+). It carries out the reaction L-threonyl-[protein] + ATP = O-phospho-L-threonyl-[protein] + ADP + H(+). Its function is as follows. Probable serine/threonine protein kinase which may function redundantly with MPK1-independent branch of the PCK1 pathway that is presumed to be required for the tolerance to high temperatures and staurosporine. The polypeptide is Serine/threonine-protein kinase ISR1 (ISR1) (Saccharomyces cerevisiae (strain ATCC 204508 / S288c) (Baker's yeast)).